The chain runs to 401 residues: MSESAFAERIVHNLLDTDFYKLTMMQGVLHNYPDADVEWEFRCRNGEDLRPYLGEIRNQLERLNDLTLDDGQLPFLERISFLKPDFLRFLRLFRFNLRYVRVGIENDQLFLRLKGPWLHVILFEVPLLAIISEVRNRQLHPHMRLAEARDQLYRKFDWLRAHASDEELAELQVADFGTRRRFSSRVQEEVVRVLRDDFPARFVGTSNVDLAWKLDIKPLGTMAHEWIMAHQQLGPRLIDSQIAALDCWVREYRGLLGIALTDCITMDAFLGDFDLYFAKLFDGLRHDSGEPVAWAEKAIAHYQKLGIDPMTKTLVFSDGLNLTRSLEIFRALRGRINVSFGIGTNLTCDIPGVAPMSIVLKMTDCNGAPVAKISDEAAKTQCRDENFVAYMRHVFKVPSKE.

Position 224 is a phosphohistidine; by autocatalysis (H224).

It belongs to the NAPRTase family. Transiently phosphorylated on a His residue during the reaction cycle. Phosphorylation strongly increases the affinity for substrates and increases the rate of nicotinate D-ribonucleotide production. Dephosphorylation regenerates the low-affinity form of the enzyme, leading to product release.

The enzyme catalyses nicotinate + 5-phospho-alpha-D-ribose 1-diphosphate + ATP + H2O = nicotinate beta-D-ribonucleotide + ADP + phosphate + diphosphate. The protein operates within cofactor biosynthesis; NAD(+) biosynthesis; nicotinate D-ribonucleotide from nicotinate: step 1/1. Functionally, catalyzes the synthesis of beta-nicotinate D-ribonucleotide from nicotinate and 5-phospho-D-ribose 1-phosphate at the expense of ATP. This chain is Nicotinate phosphoribosyltransferase, found in Pseudomonas putida (strain GB-1).